Consider the following 114-residue polypeptide: T cell receptor beta variable 6-9 (114 aa).

An N-terminal signal peptide occupies residues 1–21 (MSIGLLCCVAFSLLWAGPVNA). The Ig-like domain maps to 22–114 (GVTQTPKFHI…TSVYFCASSY (93 aa)). A disulfide bond links C42 and C110. N84 carries an N-linked (GlcNAc...) asparagine glycan.

Alpha-beta TR is a heterodimer composed of an alpha and beta chain; disulfide-linked. The alpha-beta TR is associated with the transmembrane signaling CD3 coreceptor proteins to form the TR-CD3 (TcR or TCR). The assembly of alpha-beta TR heterodimers with CD3 occurs in the endoplasmic reticulum where a single alpha-beta TR heterodimer associates with one CD3D-CD3E heterodimer, one CD3G-CD3E heterodimer and one CD247 homodimer forming a stable octameric structure. CD3D-CD3E and CD3G-CD3E heterodimers preferentially associate with TR alpha and TR beta chains, respectively. The association of the CD247 homodimer is the last step of TcR assembly in the endoplasmic reticulum and is required for transport to the cell surface.

The protein localises to the cell membrane. Functionally, v region of the variable domain of T cell receptor (TR) beta chain that participates in the antigen recognition. Alpha-beta T cell receptors are antigen specific receptors which are essential to the immune response and are present on the cell surface of T lymphocytes. Recognize peptide-major histocompatibility (MH) (pMH) complexes that are displayed by antigen presenting cells (APC), a prerequisite for efficient T cell adaptive immunity against pathogens. Binding of alpha-beta TR to pMH complex initiates TR-CD3 clustering on the cell surface and intracellular activation of LCK that phosphorylates the ITAM motifs of CD3G, CD3D, CD3E and CD247 enabling the recruitment of ZAP70. In turn ZAP70 phosphorylates LAT, which recruits numerous signaling molecules to form the LAT signalosome. The LAT signalosome propagates signal branching to three major signaling pathways, the calcium, the mitogen-activated protein kinase (MAPK) kinase and the nuclear factor NF-kappa-B (NF-kB) pathways, leading to the mobilization of transcription factors that are critical for gene expression and essential for T cell growth and differentiation. The T cell repertoire is generated in the thymus, by V-(D)-J rearrangement. This repertoire is then shaped by intrathymic selection events to generate a peripheral T cell pool of self-MH restricted, non-autoaggressive T cells. Post-thymic interaction of alpha-beta TR with the pMH complexes shapes TR structural and functional avidity. The polypeptide is T cell receptor beta variable 6-9 (Homo sapiens (Human)).